A 472-amino-acid polypeptide reads, in one-letter code: Probable diguanylate cyclase DgcF (472 aa).

8 consecutive transmembrane segments (helical) span residues Ser21 to Val41, Leu44 to Leu64, Val90 to Val110, Leu128 to Val148, Phe167 to Pro187, Ile198 to Phe218, Leu237 to Ile257, and Leu273 to Asn293. Residues Gln330–Tyr467 form the GGDEF domain. Mg(2+) contacts are provided by Asp338 and Ile339. Residues Asn346, His351, and Asp355 each coordinate substrate. Glu381 is a binding site for Mg(2+).

In terms of assembly, homodimer. It depends on Mg(2+) as a cofactor.

Its subcellular location is the cell membrane. The enzyme catalyses 2 GTP = 3',3'-c-di-GMP + 2 diphosphate. The protein operates within purine metabolism; 3',5'-cyclic di-GMP biosynthesis. In terms of biological role, catalyzes the synthesis of cyclic-di-GMP (c-di-GMP) via the condensation of 2 GTP molecules. This is Probable diguanylate cyclase DgcF from Escherichia coli O157:H7.